A 634-amino-acid chain; its full sequence is uncharacterized protein (634 aa).

The N-terminal stretch at 1–40 (MWLQQRLKGLPGLLSSSWARRLLCLLGLLLLLLWFGGSGA) is a signal peptide. The Extracellular portion of the chain corresponds to 41 to 589 (RRAAGGLHLL…DEHMAQQDPG (549 aa)). N-linked (GlcNAc...) asparagine glycosylation occurs at N363. Residues 590-610 (LPFLFWFSVASLITLFHLFLF) form a helical membrane-spanning segment. Residues 611–634 (KLIYNEYCGPGAKPLFRSKEDPSV) lie on the Cytoplasmic side of the membrane.

It is found in the membrane. This is an uncharacterized protein from Homo sapiens (Human).